We begin with the raw amino-acid sequence, 158 residues long: NAD(P)H-quinone oxidoreductase subunit J, chloroplastic (158 aa).

The protein belongs to the complex I 30 kDa subunit family. In terms of assembly, NDH is composed of at least 16 different subunits, 5 of which are encoded in the nucleus.

Its subcellular location is the plastid. It localises to the chloroplast thylakoid membrane. The catalysed reaction is a plastoquinone + NADH + (n+1) H(+)(in) = a plastoquinol + NAD(+) + n H(+)(out). It carries out the reaction a plastoquinone + NADPH + (n+1) H(+)(in) = a plastoquinol + NADP(+) + n H(+)(out). NDH shuttles electrons from NAD(P)H:plastoquinone, via FMN and iron-sulfur (Fe-S) centers, to quinones in the photosynthetic chain and possibly in a chloroplast respiratory chain. The immediate electron acceptor for the enzyme in this species is believed to be plastoquinone. Couples the redox reaction to proton translocation, and thus conserves the redox energy in a proton gradient. The chain is NAD(P)H-quinone oxidoreductase subunit J, chloroplastic from Chloranthus spicatus (Chulantree).